We begin with the raw amino-acid sequence, 367 residues long: CST complex subunit STN1 (367 aa).

The OB DNA-binding region spans 56-154 (VEILGTVIGR…EIRVTTYYKV (99 aa)). 2 winged helix-turn-helix (wHTH) regions span residues 190 to 294 (RAFS…YVTR) and 295 to 367 (EDKE…YTAF).

The protein belongs to the STN1 family. Component of the CST complex, composed of TEN1, CTC1 and STN1. Interacts with TEN1 and CTC1; the interaction is direct. Interacts with ACD/TPP1.

It localises to the nucleus. The protein localises to the chromosome. Its subcellular location is the telomere. Functionally, component of the CST complex, a complex that binds to single-stranded DNA and is required to protect telomeres from DNA degradation. The CST complex binds single-stranded DNA with high affinity in a sequence-independent manner, while isolated subunits bind DNA with low affinity by themselves. In addition to telomere protection, the CST complex has probably a more general role in DNA metabolism at non-telomeric sites. The chain is CST complex subunit STN1 from Ailuropoda melanoleuca (Giant panda).